The chain runs to 144 residues: Gas vesicle protein I1 (144 aa).

Residues 1 to 144 are disordered; sequence MSDKQQQKHK…SPTEDEVNDE (144 aa). 2 stretches are compositionally biased toward basic residues: residues 7 to 17 and 26 to 46; these read QKHKQKARQAR and KARRNLLRQREKLARRRTRNR. Over residues 75–94 the composition is skewed to polar residues; it reads MPPQKSNAENAVRNSHSTVP. A compositionally biased stretch (low complexity) spans 122–136; sequence SEASAPSDESASGSP.

It belongs to the gas vesicle GvpI family. GvpF to GvpM interact with each other in vitro, and may form multi-subunit complex(es). Interacts with GvpC1 and GvpO.

It localises to the gas vesicle. Proteins GvpF to GvpM might be involved in nucleating gas vesicle formation. A minor component of the gas vesicle. Gas vesicles are hollow, gas filled proteinaceous nanostructures found in several microbial planktonic microorganisms. They allow positioning of halobacteria at the optimal depth for growth in the poorly aerated, shallow brine pools of their habitat. Functionally, expression of a 9.5 kb p-vac DNA fragment containing 2 divergently transcribed regions (gvpD-gvpE-gvpF-gvpG-gvpH-gvpI-gvpJ-gvpK-gvpL-gvpM and gvpA-gvpC-gvpN-gvpO) allows H.volcanii to produce gas vesicles. A similar region restores gas vesicle production in H.halobium without the p-vac locus, but it still has the c-vac locus. This chain is Gas vesicle protein I1 (gvpI11), found in Halobacterium salinarum (strain ATCC 700922 / JCM 11081 / NRC-1) (Halobacterium halobium).